Reading from the N-terminus, the 65-residue chain is Large ribosomal subunit protein bL35 (65 aa).

Belongs to the bacterial ribosomal protein bL35 family.

The chain is Large ribosomal subunit protein bL35 from Photorhabdus laumondii subsp. laumondii (strain DSM 15139 / CIP 105565 / TT01) (Photorhabdus luminescens subsp. laumondii).